Consider the following 101-residue polypeptide: Small integral membrane protein 21 (101 aa).

A helical transmembrane segment spans residues 49–65 (HIRFFTLLVLFHVMVLL).

Its subcellular location is the membrane. In Homo sapiens (Human), this protein is Small integral membrane protein 21 (SMIM21).